A 193-amino-acid chain; its full sequence is Probable chemoreceptor glutamine deamidase CheD 1 (193 aa).

Positions 1 to 26 are disordered; that stretch reads MPHTPPAYPAASADHRPPSSPPAEPA.

This sequence belongs to the CheD family.

The catalysed reaction is L-glutaminyl-[protein] + H2O = L-glutamyl-[protein] + NH4(+). In terms of biological role, probably deamidates glutamine residues to glutamate on methyl-accepting chemotaxis receptors (MCPs), playing an important role in chemotaxis. The sequence is that of Probable chemoreceptor glutamine deamidase CheD 1 from Chromobacterium violaceum (strain ATCC 12472 / DSM 30191 / JCM 1249 / CCUG 213 / NBRC 12614 / NCIMB 9131 / NCTC 9757 / MK).